Reading from the N-terminus, the 783-residue chain is BMP/retinoic acid-inducible neural-specific protein 2 (783 aa).

The first 33 residues, 1–33 (MRWPCSSWFRGLWPEAAPWAVLLALGVPGWVLA), serve as a signal peptide directing secretion. Residues 85-281 (RYRIYREFAR…FVAAALSYIT (197 aa)) form the MACPF domain. Asparagine 185, asparagine 354, asparagine 473, asparagine 579, asparagine 626, and asparagine 658 each carry an N-linked (GlcNAc...) asparagine glycan.

This sequence belongs to the BRINP family. Weakly expressed in embryonic stem (ES) cells. Strongly expressed in ES-derived neural stem cells (NSCs).

It is found in the secreted. Its function is as follows. Inhibits neuronal cell proliferation by negative regulation of the cell cycle transition. The chain is BMP/retinoic acid-inducible neural-specific protein 2 (Brinp2) from Mus musculus (Mouse).